A 270-amino-acid polypeptide reads, in one-letter code: Putative serine acetyltransferase (270 aa).

It belongs to the transferase hexapeptide repeat family.

The protein localises to the cytoplasm. It is found in the nucleus. It catalyses the reaction L-serine + acetyl-CoA = O-acetyl-L-serine + CoA. Its pathway is amino-acid biosynthesis; L-cysteine biosynthesis; L-cysteine from L-serine: step 1/2. This Schizosaccharomyces pombe (strain 972 / ATCC 24843) (Fission yeast) protein is Putative serine acetyltransferase.